Reading from the N-terminus, the 237-residue chain is 4-hydroxy-tetrahydrodipicolinate reductase (237 aa).

NAD(+)-binding positions include 11-16, 92-94, and 116-119; these read GASGRM, GTT, and GSNF. His148 (proton donor/acceptor) is an active-site residue. (S)-2,3,4,5-tetrahydrodipicolinate is bound at residue His149. Lys152 serves as the catalytic Proton donor. 158-159 contributes to the (S)-2,3,4,5-tetrahydrodipicolinate binding site; that stretch reads GS.

It belongs to the DapB family.

The protein resides in the cytoplasm. The catalysed reaction is (S)-2,3,4,5-tetrahydrodipicolinate + NAD(+) + H2O = (2S,4S)-4-hydroxy-2,3,4,5-tetrahydrodipicolinate + NADH + H(+). The enzyme catalyses (S)-2,3,4,5-tetrahydrodipicolinate + NADP(+) + H2O = (2S,4S)-4-hydroxy-2,3,4,5-tetrahydrodipicolinate + NADPH + H(+). Its pathway is amino-acid biosynthesis; L-lysine biosynthesis via DAP pathway; (S)-tetrahydrodipicolinate from L-aspartate: step 4/4. In terms of biological role, catalyzes the conversion of 4-hydroxy-tetrahydrodipicolinate (HTPA) to tetrahydrodipicolinate. The protein is 4-hydroxy-tetrahydrodipicolinate reductase of Xylella fastidiosa (strain M12).